The primary structure comprises 265 residues: Apolipoprotein A-I (265 aa).

An N-terminal signal peptide occupies residues methionine 1–alanine 18. Repeat copies occupy residues leucine 67–glycine 88 and proline 89–serine 110. The segment at leucine 67 to glutamine 265 is 10 X approximate tandem repeats. Methionine sulfoxide is present on methionine 109. The stretch at lysine 111–glutamine 121 is one 3; half-length repeat. A run of 5 repeats spans residues proline 122–methionine 142, proline 144–serine 165, proline 166–alanine 187, proline 188–glycine 209, and serine 210–lysine 230. Methionine 135 is subject to Methionine sulfoxide. The stretch at proline 231–leucine 241 is one 9; half-length repeat. Repeat 10 spans residues proline 242–glutamine 265.

It belongs to the apolipoprotein A1/A4/E family. As to quaternary structure, homodimer. Interacts with APOA1BP and CLU. Component of a sperm activating protein complex (SPAP), consisting of APOA1, an immunoglobulin heavy chain, an immunoglobulin light chain and albumin. Interacts with NDRG1. Interacts with SCGB3A2. Interacts with NAXE and YJEFN3. In terms of processing, glycosylated. Palmitoylated. Post-translationally, phosphorylation sites are present in the extracellular medium. In terms of tissue distribution, major protein of plasma HDL, also found in chylomicrons. Synthesized predominantly in the intestine and the liver.

It localises to the secreted. In terms of biological role, participates in the reverse transport of cholesterol from tissues to the liver for excretion by promoting cholesterol efflux from tissues and by acting as a cofactor for the lecithin cholesterol acyltransferase (LCAT). As part of the SPAP complex, activates spermatozoa motility. This chain is Apolipoprotein A-I (APOA1), found in Sus scrofa (Pig).